A 602-amino-acid polypeptide reads, in one-letter code: Arp2/3 complex-activating protein rickA (602 aa).

Disordered regions lie at residues 307 to 484 (SSLA…AGPK), 516 to 535 (VEFDPNTGKPVAHSHSKPVQ), and 555 to 602 (MSDS…SFVK). The span at 318–442 (TPPPPLPGNN…IPPPPPPPMA (125 aa)) shows a compositional bias: pro residues. 2 consecutive WH2 domains span residues 472–489 (DTSDLMREIAGPKKLRKV) and 499–516 (SRDLLLQSIRGEHKLKKV). Residues 475 to 484 (DLMREIAGPK) show a composition bias toward basic and acidic residues. Residues 537-570 (VNKLSGVASILARRVVMEMSDSSGSESDSGNWSD) form a central and acidic domains region. Positions 555 to 566 (MSDSSGSESDSG) are enriched in low complexity. The segment covering 578–590 (KTLKTKRERRKIL) has biased composition (basic residues). Residues 591-602 (NNRNSQKPSFVK) are compositionally biased toward polar residues.

In terms of assembly, homodimer.

It localises to the cell surface. In terms of biological role, recruits and activates the Arp2/3 complex, which in turn leads to actin polymerization, promoting Rickettsia motility during infection. This chain is Arp2/3 complex-activating protein rickA (rickA), found in Rickettsia montanensis.